Reading from the N-terminus, the 291-residue chain is MHAFNLQSPTPSLAERLADLAVDALIDEADLSPKPALVDRRGNGAHTDLHLGLMHASALSLWPAFKEMADAALLLGQVGLPLREALGRIGREGEQAMLATTGGVNTHRGAIWALGLLVAAAALEPQATSAGSVALRAARLALLEDRYAPRPLSHGAQVALRYGVRGAREEAQQGFPAVLQLGLPQLKRSRAQGHGEQNARLDALLAIMSRLADTCVLYRAGELGLQAMQQGARAVLDAGGSATLAGRRRLHELDLQLLTLNASPGGAADLLAASLLLDRIESGDAVNQGAN.

This sequence belongs to the CitG/MdcB family.

It carries out the reaction 3'-dephospho-CoA + ATP = 2'-(5''-triphospho-alpha-D-ribosyl)-3'-dephospho-CoA + adenine. In terms of biological role, involved in the formation of 2-(5''-phosphoribosyl)-3'-dephosphocoenzyme-A, the prosthetic group of the acyl-carrier protein of the malonate decarboxylase. The polypeptide is Probable 2-(5''-triphosphoribosyl)-3'-dephosphocoenzyme-A synthase (Pseudomonas fluorescens (strain ATCC BAA-477 / NRRL B-23932 / Pf-5)).